The following is a 364-amino-acid chain: Protein leg1a (364 aa).

An N-terminal signal peptide occupies residues 1-22 (MSEMGFLRSVAAVLLLAVFSHA). The N-linked (GlcNAc...) asparagine glycan is linked to asparagine 70.

This sequence belongs to the LEG1 family. In terms of tissue distribution, detected in all tissues tested, with the highest levels in serum (at protein level). At mRNA level, only expressed in liver.

It localises to the secreted. Its function is as follows. Important for early development of liver, exocrine pancreas and intestine, probably through cell cycle regulation. In liver, its function is partially redundant with leg1b function. This chain is Protein leg1a, found in Danio rerio (Zebrafish).